The following is a 202-amino-acid chain: Protein-methionine-sulfoxide reductase heme-binding subunit MsrQ (202 aa).

5 helical membrane-spanning segments follow: residues 8–28 (IVWL…WLFW), 82–102 (LWCF…ELGI), 116–136 (PYLT…VTST), 149–169 (LLHN…LWSV), and 171–191 (IVSP…TWRY).

This sequence belongs to the MsrQ family. Heterodimer of a catalytic subunit (MsrP) and a heme-binding subunit (MsrQ). FMN serves as cofactor. The cofactor is heme b.

It is found in the cell inner membrane. Functionally, part of the MsrPQ system that repairs oxidized periplasmic proteins containing methionine sulfoxide residues (Met-O), using respiratory chain electrons. Thus protects these proteins from oxidative-stress damage caused by reactive species of oxygen and chlorine generated by the host defense mechanisms. MsrPQ is essential for the maintenance of envelope integrity under bleach stress, rescuing a wide series of structurally unrelated periplasmic proteins from methionine oxidation. MsrQ provides electrons for reduction to the reductase catalytic subunit MsrP, using the quinone pool of the respiratory chain. The chain is Protein-methionine-sulfoxide reductase heme-binding subunit MsrQ from Klebsiella pneumoniae subsp. pneumoniae (strain ATCC 700721 / MGH 78578).